A 443-amino-acid polypeptide reads, in one-letter code: Ribosomal protein uS12 methylthiotransferase RimO (443 aa).

An MTTase N-terminal domain is found at 5 to 115 (PNIGFISLGC…VMQHVHKYVP (111 aa)). [4Fe-4S] cluster is bound by residues Cys-14, Cys-50, Cys-79, Cys-147, Cys-151, and Cys-154. The Radical SAM core domain occupies 133 to 374 (LTPKHYAYLK…MQVQQRISVA (242 aa)). The region spanning 377–443 (QQKIGKTLAI…ADEYDLWGTY (67 aa)) is the TRAM domain.

Belongs to the methylthiotransferase family. RimO subfamily. It depends on [4Fe-4S] cluster as a cofactor.

The protein localises to the cytoplasm. It carries out the reaction L-aspartate(89)-[ribosomal protein uS12]-hydrogen + (sulfur carrier)-SH + AH2 + 2 S-adenosyl-L-methionine = 3-methylsulfanyl-L-aspartate(89)-[ribosomal protein uS12]-hydrogen + (sulfur carrier)-H + 5'-deoxyadenosine + L-methionine + A + S-adenosyl-L-homocysteine + 2 H(+). Functionally, catalyzes the methylthiolation of an aspartic acid residue of ribosomal protein uS12. The protein is Ribosomal protein uS12 methylthiotransferase RimO of Haemophilus ducreyi (strain 35000HP / ATCC 700724).